The following is a 504-amino-acid chain: MSKKALLMILDGWGLGDHGKDDVIFNTATPYWDYLMETYPHSQLQASGENVGLPDGQMGNSEVGHLNIGAGRVVYQDLVKINLSCRDNSILKNPEIVSAFSYAKENGKNVHFMGLTSDGGVHSSLDHLFKLCDIAKEYNIENTFVHCFMDGRDTDPKSGKGFIEQLEAHCAKSAGKVASIIGRYYAMDRDKRWERVKEAYDLLVNGIGKKATDMVQAMQESYDEGVTDEFIKPIVNAGVDGTIKEGDVVIFFNYRNDRAKELTVVLTQQDMPEAGMHTIPGLQYYCMTPYDASFKGVHILFDKENVANTLGEYLAANGKKQLHIAETEKYAHVTFFFNGGRETPYDNEDRILVPSPKVATYDLKPEMSAYEVKDKLVAAINENKYDFIVVNYANGDMVGHTGIYEAIEKAVVAVDACVKDTIEAAKAQGYEAIIIADHGNADHALNEDGTPNTAHSLNPVPCVYVTENKEAKVADGRLADVAPTILHILDMVQPAEMTGCNLIK.

Mn(2+) is bound by residues D11 and S61. S61 acts as the Phosphoserine intermediate in catalysis. Residues H122, 152-153 (RD), R183, R189, 255-258 (RNDR), and K329 each bind substrate. The Mn(2+) site is built by D396, H400, D437, H438, and H455.

The protein belongs to the BPG-independent phosphoglycerate mutase family. In terms of assembly, monomer. Mn(2+) serves as cofactor.

The catalysed reaction is (2R)-2-phosphoglycerate = (2R)-3-phosphoglycerate. It participates in carbohydrate degradation; glycolysis; pyruvate from D-glyceraldehyde 3-phosphate: step 3/5. In terms of biological role, catalyzes the interconversion of 2-phosphoglycerate and 3-phosphoglycerate. In Bacteroides fragilis (strain YCH46), this protein is 2,3-bisphosphoglycerate-independent phosphoglycerate mutase.